Reading from the N-terminus, the 478-residue chain is Aspartyl/glutamyl-tRNA(Asn/Gln) amidotransferase subunit B (478 aa).

This sequence belongs to the GatB/GatE family. GatB subfamily. Heterotrimer of A, B and C subunits.

The enzyme catalyses L-glutamyl-tRNA(Gln) + L-glutamine + ATP + H2O = L-glutaminyl-tRNA(Gln) + L-glutamate + ADP + phosphate + H(+). It carries out the reaction L-aspartyl-tRNA(Asn) + L-glutamine + ATP + H2O = L-asparaginyl-tRNA(Asn) + L-glutamate + ADP + phosphate + 2 H(+). Functionally, allows the formation of correctly charged Asn-tRNA(Asn) or Gln-tRNA(Gln) through the transamidation of misacylated Asp-tRNA(Asn) or Glu-tRNA(Gln) in organisms which lack either or both of asparaginyl-tRNA or glutaminyl-tRNA synthetases. The reaction takes place in the presence of glutamine and ATP through an activated phospho-Asp-tRNA(Asn) or phospho-Glu-tRNA(Gln). The sequence is that of Aspartyl/glutamyl-tRNA(Asn/Gln) amidotransferase subunit B from Lachnoclostridium phytofermentans (strain ATCC 700394 / DSM 18823 / ISDg) (Clostridium phytofermentans).